A 583-amino-acid chain; its full sequence is Cysteine/serine-rich nuclear protein 1 (583 aa).

Disordered regions lie at residues 1 to 79 and 306 to 381; these read MTGL…APRE and AESL…RSGV. Residues 18 to 41 are compositionally biased toward low complexity; the sequence is SSSSSSSFSSRLSLSSFPASSASP. The segment covering 54–69 has biased composition (polar residues); that stretch reads APQSDQDSCGLQSFTP. The span at 335 to 361 shows a compositional bias: low complexity; the sequence is PVSSELGDSSCSSDMTDSSTTLSSGSS. A compositionally biased stretch (pro residues) spans 364-373; it reads PNHPAHPSLP.

This sequence belongs to the AXUD1 family. As to expression, widely expressed with highest levels in thymus and lung. Low levels detected in naive T-cells.

The protein resides in the nucleus. Functionally, binds to the consensus sequence 5'-AGAGTG-3' and has transcriptional activator activity. May have a tumor-suppressor function. May play a role in apoptosis. This is Cysteine/serine-rich nuclear protein 1 (Csrnp1) from Mus musculus (Mouse).